The primary structure comprises 510 residues: Serine carboxypeptidase-like 48 (510 aa).

A signal peptide spans 1-25 (MDSKTTFLTFLLCIFIFSHFSPSTS). Intrachain disulfides connect cysteine 141–cysteine 383, cysteine 309–cysteine 326, and cysteine 349–cysteine 354. Asparagine 158 and asparagine 159 each carry an N-linked (GlcNAc...) asparagine glycan. Serine 231 is a catalytic residue. Catalysis depends on residues aspartate 421 and histidine 478.

This sequence belongs to the peptidase S10 family. In terms of tissue distribution, ubiquitous.

The protein resides in the secreted. Its function is as follows. Probable carboxypeptidase. The sequence is that of Serine carboxypeptidase-like 48 (SCPL48) from Arabidopsis thaliana (Mouse-ear cress).